The chain runs to 306 residues: Glutaminase (306 aa).

Residues Ser-64, Asn-115, Glu-159, Asn-166, Tyr-190, Tyr-242, and Val-260 each coordinate substrate.

It belongs to the glutaminase family. In terms of assembly, homotetramer.

The enzyme catalyses L-glutamine + H2O = L-glutamate + NH4(+). This is Glutaminase from Aeromonas hydrophila subsp. hydrophila (strain ATCC 7966 / DSM 30187 / BCRC 13018 / CCUG 14551 / JCM 1027 / KCTC 2358 / NCIMB 9240 / NCTC 8049).